The following is a 240-amino-acid chain: Uridylate kinase (240 aa).

An ATP-binding site is contributed by 13 to 16 (KASG). The involved in allosteric activation by GTP stretch occupies residues 21–26 (GSQGFG). Gly55 contacts UMP. Residues Gly56 and Arg60 each contribute to the ATP site. Residues Asp75 and 136–143 (TGNPFFTT) contribute to the UMP site. The ATP site is built by Thr163, Gln164, Tyr169, and Asp172.

It belongs to the UMP kinase family. As to quaternary structure, homohexamer.

It is found in the cytoplasm. It carries out the reaction UMP + ATP = UDP + ADP. It functions in the pathway pyrimidine metabolism; CTP biosynthesis via de novo pathway; UDP from UMP (UMPK route): step 1/1. With respect to regulation, allosterically activated by GTP. Inhibited by UTP. Functionally, catalyzes the reversible phosphorylation of UMP to UDP. This Brucella suis biovar 1 (strain 1330) protein is Uridylate kinase.